A 258-amino-acid polypeptide reads, in one-letter code: MQTILHTQQVEEQERFSYWRDAICDVFVKLDASQLSPHTFTGRMETGSLKDIQISEVNADSQRVVRSNRQIQKSVEDYFLVSLQTKGQAYIKQDQREARLQPGDFTLYDSTRPYVLHFEQPFQQIVFQFPRSLLLAAVRRQNKLPAILNPGTQHPVTTMVSTLLRTVASSYLHLDSITRLRVAETTLDLLATALTTISGVKLNEVNSMANVHRAGARAFISTHLADPDLTPDVVPSAKGFPPAISINYLKRKDNPSLL.

This is an uncharacterized protein from Bacillus sp. (strain OxB-1).